We begin with the raw amino-acid sequence, 425 residues long: SWI5-dependent HO expression protein 3 (425 aa).

Positions 24 to 45 are disordered; that stretch reads NLESSPTKDRNTSSQNASSSRV. Polar residues predominate over residues 35–45; that stretch reads TSSQNASSSRV. Residues 68–197 adopt a coiled-coil conformation; it reads QNLLSKLELA…LELSNQNLNY (130 aa). The interval 322–425 is disordered; sequence RKTPNTNDSS…NSMVVHGAQS (104 aa). Residues 326–338 show a composition bias toward low complexity; sequence NTNDSSSNGNSSN. Residue Ser-343 is modified to Phosphoserine. 2 stretches are compositionally biased toward polar residues: residues 345–358 and 382–397; these read YTAS…SIPK and KTNV…SPTI. Position 394 is a phosphoserine (Ser-394).

This sequence belongs to the SHE3 family. Interacts with SHE2 and MYO4.

It localises to the endoplasmic reticulum membrane. RNA-binding protein that binds specific mRNAs including the ASH1 mRNA, coding for a repressor of the HO endonuclease. Part of the mRNA localization machinery that restricts accumulation of certain proteins to the bud and in the daughter cell. Required for the delivery of cortical endoplasmic reticulum into the emerging bud. The sequence is that of SWI5-dependent HO expression protein 3 (SHE3) from Saccharomyces cerevisiae (strain ATCC 204508 / S288c) (Baker's yeast).